The following is a 693-amino-acid chain: Pentatricopeptide repeat-containing protein At2g19280 (693 aa).

PPR repeat units follow at residues 200-234 (LETV…GIFP), 235-269 (SRGV…GRHL), 270-304 (NAAV…GIRP), 305-339 (DIVA…GISQ), 340-370 (DSVS…FRLR), 372-406 (NIFV…GLLP), 407-441 (DCVC…GNPP), 442-476 (SLTT…GLKL), 477-511 (DVVT…GISP), 512-546 (DVAT…GFVP), 547-581 (STLA…RMKP), 582-616 (DVVT…GLKP), and 617-651 (DVVL…GMLP).

The protein belongs to the PPR family. P subfamily.

The chain is Pentatricopeptide repeat-containing protein At2g19280 from Arabidopsis thaliana (Mouse-ear cress).